Consider the following 339-residue polypeptide: Heat-inducible transcription repressor HrcA (339 aa).

The protein belongs to the HrcA family.

Its function is as follows. Negative regulator of class I heat shock genes (grpE-dnaK-dnaJ and groELS operons). Prevents heat-shock induction of these operons. This Thiobacillus denitrificans (strain ATCC 25259 / T1) protein is Heat-inducible transcription repressor HrcA.